The chain runs to 30 residues: Cyclotide mden-G (30 aa).

Residues 1 to 30 (GIPCAESCVYIPCITAALGCSCKNKVCYRN) constitute a cross-link (cyclopeptide (Gly-Asn)). 3 cysteine pairs are disulfide-bonded: Cys-4–Cys-20, Cys-8–Cys-22, and Cys-13–Cys-27.

It belongs to the cyclotide family. Bracelet subfamily. In terms of processing, this is a cyclic peptide.

In terms of biological role, probably participates in a plant defense mechanism. The chain is Cyclotide mden-G from Melicytus dentatus (Tree violet).